The chain runs to 29 residues: Glucagon (29 aa).

Belongs to the glucagon family.

The protein localises to the secreted. Promotes hydrolysis of glycogen and lipids, and raises the blood sugar level. The protein is Glucagon (gcg) of Thunnus obesus (Bigeye tuna).